Here is a 390-residue protein sequence, read N- to C-terminus: GDSL esterase/lipase At1g28580 (390 aa).

Residues 1-28 (MAYPGSPILMKLLVFIFLSTFVVTNVSS) form the signal peptide. The active-site Nucleophile is the Ser44. Residues Asn140 and Asn322 are each glycosylated (N-linked (GlcNAc...) asparagine). Active-site residues include Asp347 and His350.

This sequence belongs to the 'GDSL' lipolytic enzyme family.

Its subcellular location is the secreted. This Arabidopsis thaliana (Mouse-ear cress) protein is GDSL esterase/lipase At1g28580.